The following is a 361-amino-acid chain: Phosphoserine aminotransferase (361 aa).

R43 contributes to the L-glutamate binding site. Pyridoxal 5'-phosphate-binding positions include 77 to 78 (AS), W103, T153, D173, and Q196. Position 197 is an N6-(pyridoxal phosphate)lysine (K197). 238–239 (NT) is a pyridoxal 5'-phosphate binding site.

This sequence belongs to the class-V pyridoxal-phosphate-dependent aminotransferase family. SerC subfamily. Homodimer. It depends on pyridoxal 5'-phosphate as a cofactor.

Its subcellular location is the cytoplasm. It catalyses the reaction O-phospho-L-serine + 2-oxoglutarate = 3-phosphooxypyruvate + L-glutamate. It carries out the reaction 4-(phosphooxy)-L-threonine + 2-oxoglutarate = (R)-3-hydroxy-2-oxo-4-phosphooxybutanoate + L-glutamate. It functions in the pathway amino-acid biosynthesis; L-serine biosynthesis; L-serine from 3-phospho-D-glycerate: step 2/3. Its pathway is cofactor biosynthesis; pyridoxine 5'-phosphate biosynthesis; pyridoxine 5'-phosphate from D-erythrose 4-phosphate: step 3/5. In terms of biological role, catalyzes the reversible conversion of 3-phosphohydroxypyruvate to phosphoserine and of 3-hydroxy-2-oxo-4-phosphonooxybutanoate to phosphohydroxythreonine. This chain is Phosphoserine aminotransferase, found in Pseudomonas aeruginosa (strain ATCC 15692 / DSM 22644 / CIP 104116 / JCM 14847 / LMG 12228 / 1C / PRS 101 / PAO1).